Consider the following 517-residue polypeptide: Retinal dehydrogenase 2 (517 aa).

NAD(+) is bound by residues 184-186, 210-213, and 264-266; these read IPW, KPAE, and STE. Catalysis depends on glutamate 286, which acts as the Proton acceptor. The active-site Nucleophile is the cysteine 320. NAD(+) contacts are provided by residues 366–370 and glutamate 417; that span reads KQYNK.

The protein belongs to the aldehyde dehydrogenase family. In terms of assembly, homotetramer. In terms of tissue distribution, expressed in the high vocal center (HVC) which integrates auditory and motor activities and constitutes a nodal nucleus on the song system.

It is found in the cytoplasm. It catalyses the reaction retinal + NAD(+) + H2O = retinoate + NADH + 2 H(+). The enzyme catalyses all-trans-retinal + NAD(+) + H2O = all-trans-retinoate + NADH + 2 H(+). The catalysed reaction is all-trans-13,14-dihydroretinal + NAD(+) + H2O = all-trans-13,14-dihydroretinoate + NADH + 2 H(+). Its pathway is cofactor metabolism; retinol metabolism. Catalyzes the NAD-dependent oxidation of aldehyde substrates, such as all-trans-retinal and all-trans-13,14-dihydroretinal, to their corresponding carboxylic acids, all-trans-retinoate and all-trans-13,14-dihydroretinoate, respectively. Retinoate signaling is critical for the transcriptional control of many genes, for instance it is crucial for initiation of meiosis in both male and female. Recognizes retinal as substrate, both in its free form and when bound to cellular retinol-binding protein. Lacks activity with benzaldehyde, acetaldehyde and octanal. Displays complete lack of activity with citral. Plays a significant role in the acquisition and production of learned songs. This chain is Retinal dehydrogenase 2 (ALDH1A2), found in Taeniopygia guttata (Zebra finch).